Here is a 329-residue protein sequence, read N- to C-terminus: Serine dehydratase-like (329 aa).

An N-acetylmethionine modification is found at methionine 1. Residue lysine 48 is modified to N6-(pyridoxal phosphate)lysine.

The protein belongs to the serine/threonine dehydratase family. In terms of assembly, monomer. Homodimer. Pyridoxal 5'-phosphate is required as a cofactor.

It carries out the reaction L-serine = pyruvate + NH4(+). It catalyses the reaction L-threonine = 2-oxobutanoate + NH4(+). The catalysed reaction is L-glutamate = D-glutamate. Serine dehydratase activity is inhibited by manganese chloride, ferrous chloride, cobalt chloride, cupric chloride, nickel chloride and zinc chloride. Glutamate racemase activity is inhibited by manganese chloride, ferrous chloride, cupric chloride and zinc chloride. In terms of biological role, catalyzes the pyridoxal-phosphate-dependent dehydrative deamination of L-threonine and L-serine to ammonia and alpha-ketobutyrate and pyruvate, respectively. Also exhibits racemase activity towards L-glutamate and D-glutamate. In Rattus norvegicus (Rat), this protein is Serine dehydratase-like (Sdsl).